The following is a 423-amino-acid chain: Type II methyltransferase M.NlaIV (423 aa).

In terms of domain architecture, SAM-dependent MTase C5-type spans 4-423; the sequence is IKFIDLFSGM…AVSERLLHTL (420 aa). Cys-80 is a catalytic residue.

This sequence belongs to the class I-like SAM-binding methyltransferase superfamily. C5-methyltransferase family.

The enzyme catalyses a 2'-deoxycytidine in DNA + S-adenosyl-L-methionine = a 5-methyl-2'-deoxycytidine in DNA + S-adenosyl-L-homocysteine + H(+). Functionally, a methylase that recognizes the double-stranded sequence 5'-GGNNCC-3', methylates C-? on both strands, and protects the DNA from cleavage by the NlaIV endonuclease. In Neisseria lactamica, this protein is Type II methyltransferase M.NlaIV (nlaIVM).